The following is an 84-amino-acid chain: Small ribosomal subunit protein bS20 (84 aa).

This sequence belongs to the bacterial ribosomal protein bS20 family.

Binds directly to 16S ribosomal RNA. In Latilactobacillus sakei subsp. sakei (strain 23K) (Lactobacillus sakei subsp. sakei), this protein is Small ribosomal subunit protein bS20.